A 697-amino-acid polypeptide reads, in one-letter code: tRNA 5-methylaminomethyl-2-thiouridine biosynthesis bifunctional protein MnmC (697 aa).

Positions 1–275 are tRNA (mnm(5)s(2)U34)-methyltransferase; the sequence is MTAKPHKSCQ…KPATLAAIDH (275 aa). Residues 280–697 form an FAD-dependent cmnm(5)s(2)U34 oxidoreductase region; the sequence is VGGGLASANL…LRKLLKGKAL (418 aa).

It in the N-terminal section; belongs to the methyltransferase superfamily. tRNA (mnm(5)s(2)U34)-methyltransferase family. In the C-terminal section; belongs to the DAO family. The cofactor is FAD.

The protein localises to the cytoplasm. The enzyme catalyses 5-aminomethyl-2-thiouridine(34) in tRNA + S-adenosyl-L-methionine = 5-methylaminomethyl-2-thiouridine(34) in tRNA + S-adenosyl-L-homocysteine + H(+). Its function is as follows. Catalyzes the last two steps in the biosynthesis of 5-methylaminomethyl-2-thiouridine (mnm(5)s(2)U) at the wobble position (U34) in tRNA. Catalyzes the FAD-dependent demodification of cmnm(5)s(2)U34 to nm(5)s(2)U34, followed by the transfer of a methyl group from S-adenosyl-L-methionine to nm(5)s(2)U34, to form mnm(5)s(2)U34. This chain is tRNA 5-methylaminomethyl-2-thiouridine biosynthesis bifunctional protein MnmC, found in Shewanella sp. (strain ANA-3).